A 45-amino-acid chain; its full sequence is Cytochrome c6 (45 aa).

Cys-12, Cys-15, and His-16 together coordinate heme c.

Belongs to the cytochrome c family. PetJ subfamily. In terms of assembly, monomer. Binds 1 heme c group covalently per subunit.

Its subcellular location is the cellular thylakoid lumen. Its function is as follows. Functions as an electron carrier between membrane-bound cytochrome b6-f and photosystem I in oxygenic photosynthesis. The protein is Cytochrome c6 (petJ) of Prochlorothrix hollandica.